The sequence spans 283 residues: 4-diphosphocytidyl-2-C-methyl-D-erythritol kinase (283 aa).

Residue lysine 10 is part of the active site. Position 99–109 (99–109 (PMGGGLGGGSS)) interacts with ATP. Residue aspartate 141 is part of the active site.

It belongs to the GHMP kinase family. IspE subfamily. In terms of assembly, homodimer.

The enzyme catalyses 4-CDP-2-C-methyl-D-erythritol + ATP = 4-CDP-2-C-methyl-D-erythritol 2-phosphate + ADP + H(+). It functions in the pathway isoprenoid biosynthesis; isopentenyl diphosphate biosynthesis via DXP pathway; isopentenyl diphosphate from 1-deoxy-D-xylulose 5-phosphate: step 3/6. In terms of biological role, catalyzes the phosphorylation of the position 2 hydroxy group of 4-diphosphocytidyl-2C-methyl-D-erythritol. The chain is 4-diphosphocytidyl-2-C-methyl-D-erythritol kinase from Salmonella typhi.